Consider the following 218-residue polypeptide: MSESQNRPKSPLARRFRGFLPVVVDVETAGFNSKTDALLEVSAVIISMEDDGMLYPEPPVSFNVEPFAGANIEQAALEFTGIDPFNPLRDAKPEADALNELFRPIRKSVKSNGCNRAILVGHNATFDHSFLFAAAERGDVKRNPFHPFSTFDTATLAALAYGHTVLSRACQLAGIPFDNKEAHSAEYDAMKTAELFCSIVNRWKELGGWTTDQQDYAD.

An Exonuclease domain is found at 22-196 (VVVDVETAGF…YDAMKTAELF (175 aa)). Positions 25, 27, 183, and 188 each coordinate Mg(2+). The active-site Proton donor/acceptor is the His-183.

It belongs to the RNase T family. Homodimer. Requires Mg(2+) as cofactor.

In terms of biological role, trims short 3' overhangs of a variety of RNA species, leaving a one or two nucleotide 3' overhang. Responsible for the end-turnover of tRNA: specifically removes the terminal AMP residue from uncharged tRNA (tRNA-C-C-A). Also appears to be involved in tRNA biosynthesis. This chain is Ribonuclease T, found in Hahella chejuensis (strain KCTC 2396).